We begin with the raw amino-acid sequence, 189 residues long: Large ribosomal subunit protein uL5 (189 aa).

This sequence belongs to the universal ribosomal protein uL5 family. Part of the 50S ribosomal subunit; part of the 5S rRNA/L5/L18/L25 subcomplex. Contacts the 5S rRNA and the P site tRNA. Forms a bridge to the 30S subunit in the 70S ribosome.

Functionally, this is one of the proteins that bind and probably mediate the attachment of the 5S RNA into the large ribosomal subunit, where it forms part of the central protuberance. In the 70S ribosome it contacts protein S13 of the 30S subunit (bridge B1b), connecting the 2 subunits; this bridge is implicated in subunit movement. Contacts the P site tRNA; the 5S rRNA and some of its associated proteins might help stabilize positioning of ribosome-bound tRNAs. In Kocuria rhizophila (strain ATCC 9341 / DSM 348 / NBRC 103217 / DC2201), this protein is Large ribosomal subunit protein uL5.